The primary structure comprises 256 residues: MVSFELNEEEFKILEDLTNDELIALSKFKDFPICKDIKDQYLLLFLFSKKFDLEKAHTLIKNNLLIREKLEISLPVVKNQVNPELAMKSSSFNIIGYRDNNGCSISYLHPSKAKPKDFTLKEYMTFLLWSQDQSAHDHSSVHRNGMTIIEDLHKISIFKHFDSRLQDFLKKNKLNDMQDVFIGRIQKIYILNPPWVLKPLLSLAKTFMKNKLISRIEICKNDQIFTTIDQSKVLFEYGGTLNLTYIDYFNSLPSNF.

In terms of domain architecture, CRAL-TRIO spans 82–245; that stretch reads NPELAMKSSS…EYGGTLNLTY (164 aa).

This chain is CRAL-TRIO domain-containing protein DDB_G0278031, found in Dictyostelium discoideum (Social amoeba).